Reading from the N-terminus, the 601-residue chain is COP9 signalosome complex subunit 1 (601 aa).

Over residues 1–10 (MQNELLDDPM) the composition is skewed to acidic residues. Disordered stretches follow at residues 1 to 54 (MQNE…LDNP) and 268 to 294 (DADD…PYMV). The segment covering 14–24 (APAAEAAAADE) has biased composition (low complexity). The region spanning 338 to 500 (TILQIKTECL…GIVRILDERD (163 aa)) is the PCI domain. The disordered stretch occupies residues 535–581 (SISDKETRPKRKNQKESAKFDRNFGGIDVDEDPRGIAGPSGLSDDFN).

This sequence belongs to the CSN1 family. As to quaternary structure, component of the CSN complex, probably composed of csn-1, csn-2, csn-3, csn-4, csn-5, csn-6 and csn-7. Within the complex it probably interacts directly with csn-2, csn-4 and csn-5. May interact with itself. Interacts with rbx-1.

The protein resides in the cytoplasm. The protein localises to the nucleus. Essential component of the COP9 signalosome complex (CSN), a complex involved in various cellular and developmental processes. The CSN complex is an essential regulator of the ubiquitin (Ubl) conjugation pathway by mediating the deneddylation of the cullin subunits of the SCF-type E3 ligase complexes, leading to decrease the Ubl ligase activity of SCF. The CSN complex plays an essential role in embryogenesis and oogenesis and is required to regulate microtubule stability in the early embryo. Mediates mei-3/katanin targeting for degradation at the meiosis to mitosis transition via deneddylation of cul-3. The polypeptide is COP9 signalosome complex subunit 1 (csn-1) (Caenorhabditis elegans).